Here is a 1368-residue protein sequence, read N- to C-terminus: MSGESMLNRRIRKQFGKLDKIVEIPDLIGMQKESYGRFLQQGVPPEKREKIGLQAIFQSVFPIKDFTKSASLEFVSYSFGGVKHSVAECIQRGMTYEIPVRIRVRLVVYDMDETSGTSSIRDIKEQEIYFGAIPLMTDNGTFIINGTERVVVSQLHRSSGIFFDHDQGKTHSSGKVVYSSRIIPVRGSWIDIEIDPKDIVHMRIDRRRKFPGTILFKALGYTVKDILDYFYTKERVFVRKKKVFKAFSEDSLRGQRATVRIKHPETGDLIVDKGRIFNKTVLKNMKSAGIDMVPIRPEDVVGAVLAAPLADSSTGEMLADAGDFISEEVFERIGELGIEELQILFIDGAGSTDSIVKTLLLDKVNTKEEALIDIYRRIRPGNPATPEVAQDFIDHLFFKPDYYDLSAVGRLKLNHRLGANAPVSLRTLRREDLLLAVKTLIHLKNTQGPVDDIDHLGNRRVRAVGELLENQYRIGLVRMERAIKERMSLQEVDALMPHDLINPKPVSAVVREFFGTSQLSQFMDQTNPLSETTHKRRLSALGPGGLTRERAGFEVRDVHPSHYGRICPIETPEGPNIGLIVSLSTYARVNGYGFIETPYRVVKDTKVSKEIKMLPAFEEGEHPIAQANAPIGKDGRYVNPVVIARVAGEFSMIKASDVELMDVSPNQLVSVSASLIPFLENDDANRALMGSNMQRQSVPLARTSAPLVGTGVEKVVARDSGVAVVARRPGEVVYVDSGRIVVRHDTDDKDPEAKPVTVYNLSKFIRSNQNTCFNHRPIVKKGQRVAPGDVLADGPATEKGELALGKNVTVAFMPWGGYNFEDSILVGETLVRDGVFTSIHIEEFEVVARDTKLGKEEITCDIPNVGEESLVDLDESGIVRLGAEVKPGDVLVGKITPKGETQLSPEEKLLRAIFGEKGGNVKDTSLRVPPGVSGTVIDAKVFTRRGVEKDTRTRMIEEEEIRVLEKNRDDEIAVIEEVTRERLKALLTGQKCDTPVKKGKKTILAKGDKITAALFDEVPTSQFEKLAVTSDSVTEQAHRVFEWYRTQVDACREEFEARISRYGAGEELPPGVIKMVKVYVAMKRVLSTGDKMAGRHGNKGVVSRILPQEDLPYFEDGTTVDMVLNPLGVPSRMNVGQILEIHLGRAARVLGDQISTMLEEKKYKDLKKKLSAVFNKEIPAAEIEAMSSARLCEFASEYKDGVHMETPVFDGAKEAEIKALLKEGGADETGQAILYDGRTGQPFDERITVGTMYMLKLHHLVDDKLHARSIGPYSLVTQQPLGGKAQFGGQRLGEMEVWAMEAYGAAYALQEFLTVKSDDIAGRTRMYEKIVKGQNVLDPGIPESFKVLTKEMKALGLDVTLIEQQDKE.

The protein belongs to the RNA polymerase beta chain family. As to quaternary structure, the RNAP catalytic core consists of 2 alpha, 1 beta, 1 beta' and 1 omega subunit. When a sigma factor is associated with the core the holoenzyme is formed, which can initiate transcription.

The catalysed reaction is RNA(n) + a ribonucleoside 5'-triphosphate = RNA(n+1) + diphosphate. Functionally, DNA-dependent RNA polymerase catalyzes the transcription of DNA into RNA using the four ribonucleoside triphosphates as substrates. This is DNA-directed RNA polymerase subunit beta from Desulfosudis oleivorans (strain DSM 6200 / JCM 39069 / Hxd3) (Desulfococcus oleovorans).